Here is a 341-residue protein sequence, read N- to C-terminus: Methionine import ATP-binding protein MetN (341 aa).

In terms of domain architecture, ABC transporter spans 6-247 (IEIKKLSKNF…PQHQATRHLL (242 aa)). Residue 44-51 (GMSGAGKS) coordinates ATP.

This sequence belongs to the ABC transporter superfamily. Methionine importer (TC 3.A.1.24) family. The complex is composed of two ATP-binding proteins (MetN), two transmembrane proteins (MetI) and a solute-binding protein (MetQ).

The protein localises to the cell inner membrane. It catalyses the reaction L-methionine(out) + ATP + H2O = L-methionine(in) + ADP + phosphate + H(+). The catalysed reaction is D-methionine(out) + ATP + H2O = D-methionine(in) + ADP + phosphate + H(+). Functionally, part of the ABC transporter complex MetNIQ involved in methionine import. Responsible for energy coupling to the transport system. The chain is Methionine import ATP-binding protein MetN from Protochlamydia amoebophila (strain UWE25).